The chain runs to 184 residues: Protein GrpE (184 aa).

Positions M1–D26 are disordered.

Belongs to the GrpE family. As to quaternary structure, homodimer.

The protein resides in the cytoplasm. Its function is as follows. Participates actively in the response to hyperosmotic and heat shock by preventing the aggregation of stress-denatured proteins, in association with DnaK and GrpE. It is the nucleotide exchange factor for DnaK and may function as a thermosensor. Unfolded proteins bind initially to DnaJ; upon interaction with the DnaJ-bound protein, DnaK hydrolyzes its bound ATP, resulting in the formation of a stable complex. GrpE releases ADP from DnaK; ATP binding to DnaK triggers the release of the substrate protein, thus completing the reaction cycle. Several rounds of ATP-dependent interactions between DnaJ, DnaK and GrpE are required for fully efficient folding. This Bordetella bronchiseptica (strain ATCC BAA-588 / NCTC 13252 / RB50) (Alcaligenes bronchisepticus) protein is Protein GrpE.